We begin with the raw amino-acid sequence, 310 residues long: Olfactory receptor 4K14 (310 aa).

Residues 1 to 25 are Extracellular-facing; it reads MDPQNYSLVSEFVLHGLCTSRHLQN. A glycan (N-linked (GlcNAc...) asparagine) is linked at Asn5. The chain crosses the membrane as a helical span at residues 26 to 49; it reads FFFIFFFGVYVAIMLGNLLILVTV. Topologically, residues 50-58 are cytoplasmic; it reads ISDPCLHSS. A helical transmembrane segment spans residues 59 to 80; that stretch reads PMYFLLGNLAFLDMWLASFATP. Residues 81–101 lie on the Extracellular side of the membrane; sequence KMIRDFLSDQKLISFGGCMAQ. Cys98 and Cys190 are joined by a disulfide. The helical transmembrane segment at 102 to 121 threads the bilayer; it reads IFFLHFTGGAEMVLLVSMAY. The Cytoplasmic portion of the chain corresponds to 122–140; sequence DRYVAICKPLHYMTLMSWQ. A helical membrane pass occupies residues 141–159; it reads TCIRLVLASWVVGFVHSIS. Over 160-196 the chain is Extracellular; that stretch reads QVAFTVNLPYCGPNEVDSFFCDLPLVIKLACMDTYVL. Residues 197-220 traverse the membrane as a helical segment; it reads GIIMISDSGLLSLSCFLLLLISYT. At 221 to 236 the chain is on the cytoplasmic side; that stretch reads VILLAIRQRAAGSTSK. The chain crosses the membrane as a helical span at residues 237-259; the sequence is ALSTCSAHIMVVTLFFGPCIFVY. Residues 260 to 270 lie on the Extracellular side of the membrane; sequence VRPFSRFSVDK. The helical transmembrane segment at 271–290 threads the bilayer; the sequence is LLSVFYTIFTPLLNPIIYTL. Topologically, residues 291 to 310 are cytoplasmic; sequence RNEEMKAAMKKLQNRRVTFQ.

The protein belongs to the G-protein coupled receptor 1 family.

It localises to the cell membrane. In terms of biological role, odorant receptor. This chain is Olfactory receptor 4K14 (OR4K14), found in Homo sapiens (Human).